The primary structure comprises 322 residues: 4-hydroxythreonine-4-phosphate dehydrogenase (322 aa).

Position 132 (Thr132) interacts with substrate. Residues His160, His205, and His260 each contribute to the a divalent metal cation site. Positions 268, 277, and 286 each coordinate substrate.

This sequence belongs to the PdxA family. As to quaternary structure, homodimer. It depends on Zn(2+) as a cofactor. The cofactor is Mg(2+). Co(2+) serves as cofactor.

The protein resides in the cytoplasm. The catalysed reaction is 4-(phosphooxy)-L-threonine + NAD(+) = 3-amino-2-oxopropyl phosphate + CO2 + NADH. The protein operates within cofactor biosynthesis; pyridoxine 5'-phosphate biosynthesis; pyridoxine 5'-phosphate from D-erythrose 4-phosphate: step 4/5. Its function is as follows. Catalyzes the NAD(P)-dependent oxidation of 4-(phosphooxy)-L-threonine (HTP) into 2-amino-3-oxo-4-(phosphooxy)butyric acid which spontaneously decarboxylates to form 3-amino-2-oxopropyl phosphate (AHAP). The sequence is that of 4-hydroxythreonine-4-phosphate dehydrogenase from Xanthomonas oryzae pv. oryzae (strain PXO99A).